The sequence spans 1133 residues: Trafficking protein particle complex subunit 11 (1133 aa).

An N6-acetyllysine modification is found at lysine 245.

This sequence belongs to the TRAPPC11 family. In terms of assembly, component of the multisubunit TRAPP (transport protein particle) complex, which includes at least TRAPPC2, TRAPPC2L, TRAPPC3, TRAPPC3L, TRAPPC4, TRAPPC5, TRAPPC8, TRAPPC9, TRAPPC10, TRAPPC11 and TRAPPC12.

Its subcellular location is the golgi apparatus. It localises to the cis-Golgi network. Involved in endoplasmic reticulum to Golgi apparatus trafficking at a very early stage. This chain is Trafficking protein particle complex subunit 11 (TRAPPC11), found in Homo sapiens (Human).